Here is a 327-residue protein sequence, read N- to C-terminus: Deoxynucleotidyltransferase terminal-interacting protein 1 (327 aa).

A compositionally biased stretch (gly residues) spans 1 to 11; the sequence is MGATGDTGGPR. 2 disordered regions span residues 1-34 and 146-172; these read MGAT…PVLT and KRGR…LPGH. The tract at residues 55–146 is important for dimerization; sequence MTTSFTDPAI…RLAHELPGIK (92 aa). The span at 146–161 shows a compositional bias: basic and acidic residues; sequence KRGRQAEEESHREAPF. Positions 157 to 171 form a DNA-binding region, a.T hook; it reads REAPFPKRGKVGLPG. The short motif at 162 to 168 is the Nuclear localization signal element; sequence PKRGKVG. The interval 195-314 is important for DNA and nucleosome binding; that stretch reads REGPKWDPAR…MRKYMETLRT (120 aa). The H-T-H motif DNA-binding region spans 214–235; sequence GSRANKALGMGGTRGRIYIKHP.

As to quaternary structure, monomer and homodimer. A minor proportion may form homotrimers. Interacts with ZNF541. Interacts with the terminal deoxynucleotidyltransferase DNTT. Interacts with TRERF1. Identified in a histone deacetylase complex that contains DNTTIP1, HDAC1 and MIDEAS; this complex assembles into a tetramer that contains four copies of each protein chain. Component of a histone deacetylase complex containing DNTTIP1, ZNF541, HDAC1 and HDAC2. Identified in a complex with KCTD19, HDAC1, HDAC2 and ZNF541. In terms of tissue distribution, expressed in thymus, bone marrow and spleen.

Its subcellular location is the nucleus. Its function is as follows. Increases DNTT terminal deoxynucleotidyltransferase activity (in vitro). Also acts as a transcriptional regulator, binding to the consensus sequence 5'-GNTGCATG-3' following an AT-tract. Associates with RAB20 promoter and positively regulates its transcription. Binds DNA and nucleosomes; may recruit HDAC1 complexes to nucleosomes or naked DNA. This is Deoxynucleotidyltransferase terminal-interacting protein 1 (Dnttip1) from Rattus norvegicus (Rat).